The chain runs to 389 residues: Apicidin F cluster transcription factor apf2 (389 aa).

2 stretches are compositionally biased toward polar residues: residues M1–D13 and P75–L84. 3 disordered regions span residues M1–R27, P65–L84, and E219–P239. A basic DNA-binding region region spans residues T12–E38. 4 ANK repeats span residues E241–T270, H274–M303, S307–R336, and Q357–I386.

The protein belongs to the bZIP family. Highly divergent.

The protein resides in the nucleus. Transcription factor that regulates the expression of the gene cluster that mediates the biosynthesis of apicidin F. Binds to the eight-base-pair motif 5'-TGACGTGA-3' called the 'Api-box' that is found in all promoters of the apicidin F cluster except in the promoter region of apf2 itself. This chain is Apicidin F cluster transcription factor apf2, found in Gibberella fujikuroi (strain CBS 195.34 / IMI 58289 / NRRL A-6831) (Bakanae and foot rot disease fungus).